The primary structure comprises 293 residues: Ribosomal protein L11 methyltransferase (293 aa).

S-adenosyl-L-methionine-binding residues include Thr-145, Gly-166, Asp-188, and Asn-230.

The protein belongs to the methyltransferase superfamily. PrmA family.

The protein resides in the cytoplasm. It carries out the reaction L-lysyl-[protein] + 3 S-adenosyl-L-methionine = N(6),N(6),N(6)-trimethyl-L-lysyl-[protein] + 3 S-adenosyl-L-homocysteine + 3 H(+). Functionally, methylates ribosomal protein L11. In Shigella sonnei (strain Ss046), this protein is Ribosomal protein L11 methyltransferase.